Reading from the N-terminus, the 544-residue chain is BTB/POZ domain-containing protein At2g13690 (544 aa).

2 disordered regions span residues 34–66 and 82–111; these read ASPD…PQSS and LSPG…EEDD. Residues 37-55 show a composition bias toward polar residues; the sequence is DTRSISSRNHIPAKSQQQR. The segment covering 93–103 has biased composition (low complexity); it reads DPTVTTMQETE. Positions 142 to 225 constitute a BTB domain; sequence YDARLSLKGR…MFEESNVIIK (84 aa).

It functions in the pathway protein modification; protein ubiquitination. Functionally, may act as a substrate-specific adapter of an E3 ubiquitin-protein ligase complex (CUL3-RBX1-BTB) which mediates the ubiquitination and subsequent proteasomal degradation of target proteins. The sequence is that of BTB/POZ domain-containing protein At2g13690 (PRL1-IFG) from Arabidopsis thaliana (Mouse-ear cress).